The following is a 580-amino-acid chain: NADH-ubiquinone oxidoreductase chain 5 (580 aa).

The next 16 membrane-spanning stretches (helical) occupy residues 12-32 (FYIL…FLLM), 50-70 (IVMT…VLLI), 92-112 (ILLV…PNLI), 113-133 (SILL…IYFQ), 153-173 (VALL…YIFY), 176-196 (MMKN…AAMT), 218-240 (SALV…FNIL), 249-269 (FLLL…NFEF), 274-294 (IIAL…SIGY), 300-320 (FHLL…GVII), 343-363 (CSCF…AGFY), 378-400 (NFFS…FRLV), 427-447 (IFFL…LMFF), 464-484 (MVCL…FFFI), 500-520 (MWFM…ILGM), and 560-580 (IYLL…LFLN).

This sequence belongs to the complex I subunit 5 family.

Its subcellular location is the mitochondrion inner membrane. It carries out the reaction a ubiquinone + NADH + 5 H(+)(in) = a ubiquinol + NAD(+) + 4 H(+)(out). Core subunit of the mitochondrial membrane respiratory chain NADH dehydrogenase (Complex I) that is believed to belong to the minimal assembly required for catalysis. Complex I functions in the transfer of electrons from NADH to the respiratory chain. The immediate electron acceptor for the enzyme is believed to be ubiquinone. The polypeptide is NADH-ubiquinone oxidoreductase chain 5 (Aedes aegypti (Yellowfever mosquito)).